A 324-amino-acid chain; its full sequence is Dioxygenase tasH (324 aa).

The signal sequence occupies residues 1-25 (MRSMSLWMLIGPVTGIATWASLRYA). The Zn(2+) site is built by histidine 50, histidine 96, and histidine 284.

This sequence belongs to the DODA-type extradiol aromatic ring-opening dioxygenase family. Monomer. The cofactor is Zn(2+).

Functionally, dioxygenase; part of the gene cluster that mediates the biosynthesis of the tetramic acids Sch210971 and Sch210972, potential anti-HIV fungal natural product that contain a decalin core. The PKS module of tasS together with the enoylreductase tasC catalyze the formation of the polyketide unit which is then conjugated to 4-hydroxyl-4-methyl glutamate (HMG) by the condensation domain of the tasS NRPS module. One unique structural feature of Sch210971 and Sch210972 is the tetramic acid motif proposed to be derived from the non-proteinogenic amino acid HMG, by a Dieckmann-type condensation catalyzed by the reductase domain of tasS. The aldolase tasA catalyzes the aldol condensation of 2 molecules of pyruvic acid to yield the intermediate 4-hydroxyl-4-methyl-2-oxoglutarate (HMOG), which can then be stereoselectively transaminated, may be by tasG, to form HMG. The Diels-Alderase tas3 then uses the Dieckmann product of tasS as substrate and catalyzes the Diels-Alder cycloaddition to form the decalin ring of Sch210971 and Sch210972. This is Dioxygenase tasH from Hapsidospora irregularis.